The primary structure comprises 193 residues: Cysteine and glycine-rich protein 2 (193 aa).

Positions 10 to 61 (CGACGRTVYHAEEVQCDGRSFHRCCFLCMVCRKNLDSTTVAIHDEEIYCKSC) constitute an LIM zinc-binding 1 domain. The short motif at 64–69 (KKYGPK) is the Nuclear localization signal element. Residue Lys-91 forms a Glycyl lysine isopeptide (Lys-Gly) (interchain with G-Cter in SUMO2) linkage. An N6-acetyllysine mark is found at Lys-112 and Lys-131. The 52-residue stretch at 119–170 (CSRCGDSVYAAEKIIGAGKPWHKNCFRCAKCGKSLESTTLTEKEGEIYCKGC) folds into the LIM zinc-binding 2 domain. At Lys-137 the chain carries N6-acetyllysine; alternate. Lys-137 bears the N6-succinyllysine; alternate mark. N6-acetyllysine is present on Lys-161.

In terms of assembly, interacts with KAT14. The LIM domain 1 is necessary and sufficient for this interaction. Interacts with GLRX3.

It is found in the nucleus. Its function is as follows. Drastically down-regulated in response to PDGF-BB or cell injury, that promote smooth muscle cell proliferation and dedifferentiation. Seems to play a role in the development of the embryonic vascular system. In Mus musculus (Mouse), this protein is Cysteine and glycine-rich protein 2 (Csrp2).